The chain runs to 156 residues: Large ribosomal subunit protein uL15 (156 aa).

Residues 1-13 show a composition bias toward basic and acidic residues; the sequence is MKLNEIKDNEGAT. Residues 1–41 form a disordered region; that stretch reads MKLNEIKDNEGATKNRKRLGRGIGSGSGKTAGRGVKGQKAR. A compositionally biased stretch (gly residues) spans 21 to 35; the sequence is RGIGSGSGKTAGRGV.

This sequence belongs to the universal ribosomal protein uL15 family. As to quaternary structure, part of the 50S ribosomal subunit.

Functionally, binds to the 23S rRNA. This chain is Large ribosomal subunit protein uL15, found in Sinorhizobium medicae (strain WSM419) (Ensifer medicae).